The primary structure comprises 115 residues: DNA-directed RNA polymerase II subunit RPB11-b2 (115 aa).

It belongs to the archaeal Rpo11/eukaryotic RPB11/RPC19 RNA polymerase subunit family. In terms of assembly, component of the RNA polymerase II (Pol II) complex consisting of 12 subunits.

It is found in the nucleus. DNA-dependent RNA polymerase catalyzes the transcription of DNA into RNA using the four ribonucleoside triphosphates as substrates. Component of RNA polymerase II which synthesizes mRNA precursors and many functional non-coding RNAs. Pol II is the central component of the basal RNA polymerase II transcription machinery. It is composed of mobile elements that move relative to each other. RPB11 is part of the core element with the central large cleft. The protein is DNA-directed RNA polymerase II subunit RPB11-b2 (POLR2J3) of Homo sapiens (Human).